Reading from the N-terminus, the 170-residue chain is ATP synthase subunit b (170 aa).

The helical transmembrane segment at 22-41 (ILNWAVVVFGLYKFLPGFLG) threads the bilayer. The interval 76 to 98 (LSSAAEKASQIKADSLKRSESIR) is disordered. Over residues 89-98 (DSLKRSESIR) the composition is skewed to basic and acidic residues.

This sequence belongs to the ATPase B chain family. F-type ATPases have 2 components, F(1) - the catalytic core - and F(0) - the membrane proton channel. F(1) has five subunits: alpha(3), beta(3), gamma(1), delta(1), epsilon(1). F(0) has four main subunits: a(1), b(1), b'(1) and c(10-14). The alpha and beta chains form an alternating ring which encloses part of the gamma chain. F(1) is attached to F(0) by a central stalk formed by the gamma and epsilon chains, while a peripheral stalk is formed by the delta, b and b' chains.

It localises to the cellular thylakoid membrane. F(1)F(0) ATP synthase produces ATP from ADP in the presence of a proton or sodium gradient. F-type ATPases consist of two structural domains, F(1) containing the extramembraneous catalytic core and F(0) containing the membrane proton channel, linked together by a central stalk and a peripheral stalk. During catalysis, ATP synthesis in the catalytic domain of F(1) is coupled via a rotary mechanism of the central stalk subunits to proton translocation. Its function is as follows. Component of the F(0) channel, it forms part of the peripheral stalk, linking F(1) to F(0). This is ATP synthase subunit b from Prochlorococcus marinus (strain AS9601).